Reading from the N-terminus, the 137-residue chain is MSRRQSRKSAMQLIYEMNMNGDYDKQRIEEFCKYQNINKNDIEFFKEIVLNFIEHIDDIVNIIENNTKQWNLDRINKLDLSILQVGVCEILYVESTPDSVAINEAVELAKEYSTEKSYSFINGILGSVLKRKENASL.

This sequence belongs to the NusB family.

In terms of biological role, involved in transcription antitermination. Required for transcription of ribosomal RNA (rRNA) genes. Binds specifically to the boxA antiterminator sequence of the ribosomal RNA (rrn) operons. This is Transcription antitermination protein NusB from Finegoldia magna (strain ATCC 29328 / DSM 20472 / WAL 2508) (Peptostreptococcus magnus).